The following is a 302-amino-acid chain: NAD kinase 2 (302 aa).

Catalysis depends on Asp-78, which acts as the Proton acceptor. Residues 78 to 79 (DG), 152 to 153 (NE), Asp-182, 193 to 198 (TAYALS), and Ala-217 each bind NAD(+).

This sequence belongs to the NAD kinase family. A divalent metal cation serves as cofactor.

Its subcellular location is the cytoplasm. It catalyses the reaction NAD(+) + ATP = ADP + NADP(+) + H(+). Functionally, involved in the regulation of the intracellular balance of NAD and NADP, and is a key enzyme in the biosynthesis of NADP. Catalyzes specifically the phosphorylation on 2'-hydroxyl of the adenosine moiety of NAD to yield NADP. The chain is NAD kinase 2 from Parasynechococcus marenigrum (strain WH8102).